The chain runs to 161 residues: Tropomyosin-2 (161 aa).

Residues 1–161 adopt a coiled-coil conformation; the sequence is MEKIKEKLNS…DEIANSLENL (161 aa). The span at 32 to 43 shows a compositional bias: basic and acidic residues; that stretch reads LEQSNTEKENEI. The segment at 32 to 97 is disordered; that stretch reads LEQSNTEKEN…NQDLEQQLED (66 aa). Position 55 is a phosphoserine (Ser-55). Residues 62–83 show a composition bias toward polar residues; that stretch reads SQLSDTKQLAEDSNNLRSNNEN. 2 positions are modified to phosphoserine: Ser-116 and Ser-157.

In terms of assembly, homodimer.

The protein localises to the cytoplasm. It is found in the cytoskeleton. Involved in cell morphogenesis. Binds to F-actin and stabilizes the actin filaments. The sequence is that of Tropomyosin-2 (TPM2) from Saccharomyces cerevisiae (strain ATCC 204508 / S288c) (Baker's yeast).